The chain runs to 290 residues: MPSLRDIRNRIGSVKSTRQITKAMKMVSAAKLRRAQDAILKTRPYAQLLEQTLGRIAARAAADEVVAHPLLAPRAQRTAEVVVITSDRGLAGGFNANIARRTQRFLVENADRYERVQLATIGRKGRDYFRARRLEIRKDFTGVHANLAYEKAEAIAAEYTERYLSGEVDAVFLAYNEFKSAISQKPVVFQLLPIETPPDAGDGASIDFKYEPSREALLRDLLPRHVAMQVWRALLESAASEHGARMSAMESATKNAEEMIASLTLQYNRARQAYVTKELMEIVSGAEALK.

The protein belongs to the ATPase gamma chain family. As to quaternary structure, F-type ATPases have 2 components, CF(1) - the catalytic core - and CF(0) - the membrane proton channel. CF(1) has five subunits: alpha(3), beta(3), gamma(1), delta(1), epsilon(1). CF(0) has three main subunits: a, b and c.

It localises to the cell inner membrane. Its function is as follows. Produces ATP from ADP in the presence of a proton gradient across the membrane. The gamma chain is believed to be important in regulating ATPase activity and the flow of protons through the CF(0) complex. The chain is ATP synthase gamma chain from Anaeromyxobacter sp. (strain Fw109-5).